The sequence spans 454 residues: PC-esterase domain-containing protein 1A (454 aa).

Belongs to the PC-esterase family.

This Homo sapiens (Human) protein is PC-esterase domain-containing protein 1A (PCED1A).